Consider the following 420-residue polypeptide: Glucose-1-phosphate adenylyltransferase (420 aa).

Alpha-D-glucose 1-phosphate contacts are provided by residues tyrosine 107, glycine 173, 188 to 189, and serine 206; that span reads EK.

Belongs to the bacterial/plant glucose-1-phosphate adenylyltransferase family. In terms of assembly, homotetramer.

It carries out the reaction alpha-D-glucose 1-phosphate + ATP + H(+) = ADP-alpha-D-glucose + diphosphate. It functions in the pathway glycan biosynthesis; glycogen biosynthesis. In terms of biological role, involved in the biosynthesis of ADP-glucose, a building block required for the elongation reactions to produce glycogen. Catalyzes the reaction between ATP and alpha-D-glucose 1-phosphate (G1P) to produce pyrophosphate and ADP-Glc. The protein is Glucose-1-phosphate adenylyltransferase of Shewanella oneidensis (strain ATCC 700550 / JCM 31522 / CIP 106686 / LMG 19005 / NCIMB 14063 / MR-1).